The chain runs to 493 residues: MVPVIALVGRPNVGKSTLFNRLTKSRDAIVAEYAGLTRDRQYGEARWQGRTYIVIDTGGISGDEEGIDAKMAEQSLQAIEEADAVLFLVDSRAGMTAADQMIAEHLRKRNKRSFLIANKVDTIDPDLARAEFSPLGLGDALPIAAAHGRGINHMLQEALGIFPKDNAEEEGEGEPASEEVAEGEEPTRIPGPSEKDGIKIAIIGRPNVGKSTLVNRMLGEERVIVYDQAGTTRDSIYIPFERNEEKYTLIDTAGVRRRGKIFEAVEKFSVVKTLQAIQDANVVIFVMDAREGVVEHDLNLLGFVLETGRALVIALNKWDGMEAAERDYVKTELERRLLFVDFADIHFISALHGTGVGHLYKSVQESFRSAVTRWPTSRLTSILEDAVQVHQPPMVNGRRIKLRYAHLGGANPPLIVIHGNQVDAVPKAYTRYLEKTYRRVLKLVGTPIRIEYKGGENPYEGKKNSLTARQVNKKRRLMSHHKKAEKKKKDKRR.

The EngA-type G 1 domain maps to 3-166 (PVIALVGRPN…EALGIFPKDN (164 aa)). GTP is bound by residues 9–16 (GRPNVGKS), 56–60 (DTGGI), and 118–121 (NKVD). The tract at residues 166 to 195 (NAEEEGEGEPASEEVAEGEEPTRIPGPSEK) is disordered. Residues 167-184 (AEEEGEGEPASEEVAEGE) show a composition bias toward acidic residues. Residues 198–371 (IKIAIIGRPN…SVQESFRSAV (174 aa)) form the EngA-type G 2 domain. GTP-binding positions include 204 to 211 (GRPNVGKS), 251 to 255 (DTAGV), and 316 to 319 (NKWD). Residues 372–456 (TRWPTSRLTS…PIRIEYKGGE (85 aa)) form the KH-like domain. The segment covering 454–463 (GGENPYEGKK) has biased composition (basic and acidic residues). The tract at residues 454–493 (GGENPYEGKKNSLTARQVNKKRRLMSHHKKAEKKKKDKRR) is disordered. The segment covering 471 to 493 (VNKKRRLMSHHKKAEKKKKDKRR) has biased composition (basic residues).

It belongs to the TRAFAC class TrmE-Era-EngA-EngB-Septin-like GTPase superfamily. EngA (Der) GTPase family. As to quaternary structure, associates with the 50S ribosomal subunit.

Its function is as follows. GTPase that plays an essential role in the late steps of ribosome biogenesis. This chain is GTPase Der, found in Pseudomonas aeruginosa (strain ATCC 15692 / DSM 22644 / CIP 104116 / JCM 14847 / LMG 12228 / 1C / PRS 101 / PAO1).